Reading from the N-terminus, the 155-residue chain is Transmembrane protein C1orf162 (155 aa).

The interval 1 to 28 (MGGNGSTCKPDTERQGTLSTAAPTTSPA) is disordered. The segment covering 19–28 (STAAPTTSPA) has biased composition (low complexity). A helical membrane pass occupies residues 41–61 (ILAFCAGVLLTLLLIAFIFLI). A disordered region spans residues 92–114 (ADHSKPQAPDPHSDPPAKLSSIP). Ser140 is modified (phosphoserine).

Its subcellular location is the membrane. The sequence is that of Transmembrane protein C1orf162 (C1orf162) from Homo sapiens (Human).